A 45-amino-acid chain; its full sequence is Large ribosomal subunit protein bL34 (45 aa).

Basic residues-rich tracts occupy residues 1–15 and 22–45; these read MKAKSHLSNKKRKRA and MKTKAGRKILARRRAKGRKRIAIK. The interval 1–45 is disordered; it reads MKAKSHLSNKKRKRASGFLARMKTKAGRKILARRRAKGRKRIAIK.

It belongs to the bacterial ribosomal protein bL34 family.

In Sulfurihydrogenibium sp. (strain YO3AOP1), this protein is Large ribosomal subunit protein bL34.